We begin with the raw amino-acid sequence, 29 residues long: Glucagon (29 aa).

Belongs to the glucagon family.

It localises to the secreted. Its function is as follows. Glucagon plays a key role in glucose metabolism and homeostasis. Regulates blood glucose by increasing gluconeogenesis and decreasing glycolysis. In Callorhinchus milii (Ghost shark), this protein is Glucagon (gcg).